The chain runs to 223 residues: DnaJ homolog subfamily B member 9 (223 aa).

A signal peptide spans 1-23 (MATPQSIFIFAICILMITELILA). The J domain maps to 26–90 (SYYDILGVPK…NRRKEYDTLG (65 aa)). Positions 91-223 (HSAFTNGKGQ…VTTYTDCSGQ (133 aa)) are divergent targeting domain. Serine 133 carries the phosphoserine modification.

Interacts with HSPA5/BiP; interaction is direct. Interacts with ERN1/IRE1 (via the luminal region). Interacts with DERL1.

The protein resides in the endoplasmic reticulum lumen. In terms of biological role, co-chaperone for Hsp70 protein HSPA5/BiP that acts as a key repressor of the ERN1/IRE1-mediated unfolded protein response (UPR). J domain-containing co-chaperones stimulate the ATPase activity of Hsp70 proteins and are required for efficient substrate recognition by Hsp70 proteins. In the unstressed endoplasmic reticulum, interacts with the luminal region of ERN1/IRE1 and selectively recruits HSPA5/BiP: HSPA5/BiP disrupts the dimerization of the active ERN1/IRE1 luminal region, thereby inactivating ERN1/IRE1. Also involved in endoplasmic reticulum-associated degradation (ERAD) of misfolded proteins. Required for survival of B-cell progenitors and normal antibody production. The protein is DnaJ homolog subfamily B member 9 of Pongo abelii (Sumatran orangutan).